The chain runs to 253 residues: Sec-independent protein translocase protein TatC (253 aa).

5 helical membrane-spanning segments follow: residues 19-39 (ILII…LATP), 70-90 (FAFT…LWAF), 109-129 (IAFF…FPFL), 154-174 (FLFQ…VVMF), and 194-214 (FFVL…SHLM).

This sequence belongs to the TatC family. In terms of assembly, forms a complex with TatA.

The protein resides in the cell membrane. Part of the twin-arginine translocation (Tat) system that transports large folded proteins containing a characteristic twin-arginine motif in their signal peptide across membranes. The protein is Sec-independent protein translocase protein TatC of Halalkalibacterium halodurans (strain ATCC BAA-125 / DSM 18197 / FERM 7344 / JCM 9153 / C-125) (Bacillus halodurans).